Consider the following 925-residue polypeptide: Probable glycoprotein hormone G-protein coupled receptor (925 aa).

The signal sequence occupies residues 1–27 (MEDRGICPRVLQVLFLVVLILISPVYA). Over 28 to 529 (AKNDACTKCS…EDIMGYVWLT (502 aa)) the chain is Extracellular. The N-linked (GlcNAc...) asparagine glycan is linked to Asn61. LRR repeat units follow at residues 85 to 106 (KLKYLTLNNNKIKNIAKFRVKN), 110 to 131 (SLITLSYTHNIIETIENGAFDD), 134 to 155 (QLTQLDLSNNRLKEFPIFNKTS), 156 to 180 (SVTKLYLRGNPGITKLPRQSLGNLP), 181 to 202 (SLENLFMERTGIQEIPAGIFRQ), 203 to 224 (NTRLINLYFNKTKALERINEDA), 230 to 250 (SLKTLVLDETSVTSLPSRGLK), and 251 to 273 (NLHFLSLKDVPNFWQLPELDSIR). N-linked (GlcNAc...) asparagine glycosylation is present at Asn152. An N-linked (GlcNAc...) asparagine glycan is attached at Asn212. The interval 299–493 (TMQKPSTEEN…PTLIPHSNHT (195 aa)) is disordered. Residues 301 to 318 (QKPSTEENNGQTTASSPT) show a composition bias toward polar residues. Residues 333-349 (STQPHTTSGFGGGGFPG) form a 1; truncated repeat. A 5 X approximate tandem repeats region spans residues 333–461 (STQPHTTSGF…PGGGGFPGGG (129 aa)). Residues 341–362 (GFGGGGFPGGGGGFPGGGGFPA) show a composition bias toward gly residues. 3 repeat units span residues 350 to 384 (GGGGFPGGGGFPAGGSKTSTQPHTTSGFGGGGFPG), 385 to 419 (GGGGFPGGGGFPAGGSKTSTQPHTTSGFGGGGFPG), and 420 to 453 (GGGGFPGGGGFPGGSNTSTQPHTTSNSGGGGFPG). Over residues 365-375 (SKTSTQPHTTS) the composition is skewed to polar residues. Gly residues predominate over residues 376-397 (GFGGGGFPGGGGGFPGGGGFPA). Residues 400 to 410 (SKTSTQPHTTS) are compositionally biased toward polar residues. Gly residues predominate over residues 411–432 (GFGGGGFPGGGGGFPGGGGFPG). Over residues 434-445 (SNTSTQPHTTSN) the composition is skewed to polar residues. Residue Asn435 is glycosylated (N-linked (GlcNAc...) asparagine). Positions 446–462 (SGGGGFPGGGGFPGGGT) are enriched in gly residues. The 5; truncated repeat unit spans residues 454 to 461 (GGGFPGGG). Positions 476-493 (VHQSTADPPTLIPHSNHT) are enriched in polar residues. The N-linked (GlcNAc...) asparagine glycan is linked to Asn495. A helical transmembrane segment spans residues 530-551 (VVSFMVGAVALVANLVVALVLL). The Cytoplasmic segment spans residues 552 to 561 (TSQRRLNVTR). Residues 562 to 584 (FLMCNLAFADFILGLYIFILTSV) form a helical membrane-spanning segment. The Extracellular portion of the chain corresponds to 585–606 (SAVTRGDYHNYVQQWQNGAGCK). A helical membrane pass occupies residues 607-628 (ILGFLAVFSSELSLFTLVMMTI). The Cytoplasmic portion of the chain corresponds to 629-651 (ERFYAIVHAMHMNARLSFRKTVR). Residues 652–673 (FMIGGWIFALVMAVVPLTGVSG) traverse the membrane as a helical segment. The Extracellular portion of the chain corresponds to 674-691 (YSKVAICLPFDVSDATST). The chain crosses the membrane as a helical span at residues 692–712 (AYVAFLLLVNGASFISVMYLY). Residues 713–739 (SRMLYVVVSGGDMEGAPKRNDSKVAKR) lie on the Cytoplasmic side of the membrane. Residues 740–763 (MAILVFTDMLCWAPIAFFGLLAAF) form a helical membrane-spanning segment. Over 764 to 774 (GQTLLTVTQSK) the chain is Extracellular. Residues 775-795 (ILLVFFFPINSICNPFLYAFF) traverse the membrane as a helical segment. At 796 to 925 (TKAFKRELFT…QKQKILQSPS (130 aa)) the chain is on the cytoplasmic side. The disordered stretch occupies residues 904 to 925 (VTKSSSPPHLKLQKQKILQSPS).

Belongs to the G-protein coupled receptor 1 family. FSH/LSH/TSH subfamily.

It localises to the cell membrane. Probable receptor for a glycoprotein hormone. This is Probable glycoprotein hormone G-protein coupled receptor from Anthopleura elegantissima (Green aggregating anemone).